We begin with the raw amino-acid sequence, 687 residues long: DNA ligase (687 aa).

NAD(+) contacts are provided by residues 34 to 38 (DAEYD), 83 to 84 (SL), and E117. K119 (N6-AMP-lysine intermediate) is an active-site residue. Residues R140, E182, K298, and K322 each contribute to the NAD(+) site. 4 residues coordinate Zn(2+): C416, C419, C434, and C439. The 79-residue stretch at 609 to 687 (EARGPFAGKT…EEEFVRLLKE (79 aa)) folds into the BRCT domain.

The protein belongs to the NAD-dependent DNA ligase family. LigA subfamily. It depends on Mg(2+) as a cofactor. Mn(2+) is required as a cofactor.

The catalysed reaction is NAD(+) + (deoxyribonucleotide)n-3'-hydroxyl + 5'-phospho-(deoxyribonucleotide)m = (deoxyribonucleotide)n+m + AMP + beta-nicotinamide D-nucleotide.. Its function is as follows. DNA ligase that catalyzes the formation of phosphodiester linkages between 5'-phosphoryl and 3'-hydroxyl groups in double-stranded DNA using NAD as a coenzyme and as the energy source for the reaction. It is essential for DNA replication and repair of damaged DNA. This chain is DNA ligase, found in Anaeromyxobacter sp. (strain K).